Consider the following 213-residue polypeptide: Probable transaldolase (213 aa).

Lys83 (schiff-base intermediate with substrate) is an active-site residue.

Belongs to the transaldolase family. Type 3B subfamily.

The protein resides in the cytoplasm. It catalyses the reaction D-sedoheptulose 7-phosphate + D-glyceraldehyde 3-phosphate = D-erythrose 4-phosphate + beta-D-fructose 6-phosphate. The protein operates within carbohydrate degradation; pentose phosphate pathway; D-glyceraldehyde 3-phosphate and beta-D-fructose 6-phosphate from D-ribose 5-phosphate and D-xylulose 5-phosphate (non-oxidative stage): step 2/3. Functionally, transaldolase is important for the balance of metabolites in the pentose-phosphate pathway. The sequence is that of Probable transaldolase from Geobacillus sp. (strain WCH70).